The chain runs to 333 residues: Glycerol-3-phosphate dehydrogenase [NAD(P)+] (333 aa).

NADPH contacts are provided by Ser-10, Trp-11, His-31, Arg-32, and Lys-105. 3 residues coordinate sn-glycerol 3-phosphate: Lys-105, Gly-136, and Ser-138. Ala-140 provides a ligand contact to NADPH. Residues Lys-191, Asp-244, Ser-254, Arg-255, and Asn-256 each contribute to the sn-glycerol 3-phosphate site. The Proton acceptor role is filled by Lys-191. An NADPH-binding site is contributed by Arg-255. NADPH contacts are provided by Val-279 and Glu-281.

This sequence belongs to the NAD-dependent glycerol-3-phosphate dehydrogenase family.

Its subcellular location is the cytoplasm. The catalysed reaction is sn-glycerol 3-phosphate + NAD(+) = dihydroxyacetone phosphate + NADH + H(+). It catalyses the reaction sn-glycerol 3-phosphate + NADP(+) = dihydroxyacetone phosphate + NADPH + H(+). It participates in membrane lipid metabolism; glycerophospholipid metabolism. Its function is as follows. Catalyzes the reduction of the glycolytic intermediate dihydroxyacetone phosphate (DHAP) to sn-glycerol 3-phosphate (G3P), the key precursor for phospholipid synthesis. This chain is Glycerol-3-phosphate dehydrogenase [NAD(P)+], found in Chlorobium phaeobacteroides (strain DSM 266 / SMG 266 / 2430).